The chain runs to 641 residues: Macrolide export ATP-binding/permease protein MacB (641 aa).

Positions 2–236 constitute an ABC transporter domain; it reads IFLKNICKNI…LTLKTMSKEK (235 aa). Residue 34–41 participates in ATP binding; that stretch reads GQSGSGKT. 4 consecutive transmembrane segments (helical) span residues 265-285, 519-539, 571-591, and 604-624; these read ILTM…VALG, ACVA…IMLV, MICT…IFAF, and AYSV…FGFF.

Belongs to the ABC transporter superfamily. Macrolide exporter (TC 3.A.1.122) family. Homodimer.

The protein localises to the cell inner membrane. Functionally, non-canonical ABC transporter that contains transmembrane domains (TMD), which form a pore in the inner membrane, and an ATP-binding domain (NBD), which is responsible for energy generation. Confers resistance against macrolides. The sequence is that of Macrolide export ATP-binding/permease protein MacB from Campylobacter jejuni subsp. jejuni serotype O:23/36 (strain 81-176).